The sequence spans 372 residues: MHC class I-like protein MILL2 (372 aa).

A signal peptide spans 1 to 26 (MEASSGTAGPAVLLLILALLLTESQG). The segment at 28–119 (RSQGTHTLRY…MINQKGHDKG (92 aa)) is alpha-1. 3 cysteine pairs are disulfide-bonded: Cys-78–Cys-89, Cys-129–Cys-191, and Cys-230–Cys-287. Residues 120–210 (PYTLQATLDC…SLSNVLPDTG (91 aa)) form an alpha-2 region. N-linked (GlcNAc...) asparagine glycosylation is found at Asn-134, Asn-234, and Asn-293. In terms of domain architecture, Ig-like C1-type spans 192-302 (PARLQRHLAS…NRTIMQTAVS (111 aa)). The alpha-3 stretch occupies residues 211–339 (SPVVIVTCRN…VVDGGLVTGN (129 aa)). Residues 308-349 (WPSASWATRQEAEGPHRTHNDHVVDGGLVTGNANKDSPDASS) form a disordered region. The segment covering 317-331 (QEAEGPHRTHNDHVV) has biased composition (basic and acidic residues). The connecting peptide stretch occupies residues 340–348 (ANKDSPDAS). A lipid anchor (GPI-anchor amidated serine) is attached at Ser-349. Positions 350–372 (CATASAISAFPVVVLSVALPRAN) are cleaved as a propeptide — removed in mature form.

The protein belongs to the MHC class I family. Heterodimer with B2M. As to expression, ubiquitously expressed in neonatal and adult tissues.

The protein localises to the cell membrane. In terms of biological role, binds to heparan sulfate proteoglycans on the surface of fibroblast cells. In Rattus norvegicus (Rat), this protein is MHC class I-like protein MILL2.